The sequence spans 207 residues: GILT-like protein 2 (207 aa).

The signal sequence occupies residues 1–19 (MRAAVFVCLLLGWVGVATP). C40 and C43 are oxidised to a cystine. An N-linked (GlcNAc...) asparagine glycan is attached at N182.

This sequence belongs to the GILT family.

It is found in the secreted. In terms of biological role, probable lysosomal thiol reductase that can reduce protein disulfide bonds. Involved in the immune response to bacterial infection. This is GILT-like protein 2 from Drosophila melanogaster (Fruit fly).